The primary structure comprises 427 residues: Serine--tRNA ligase 2 (427 aa).

Positions 35–53 (RRRSEAQAEVTRLRTELNR) are enriched in basic and acidic residues. The tract at residues 35 to 72 (RRRSEAQAEVTRLRTELNRTSRARGRSGPPSEEEKEAA) is disordered. L-serine is bound at residue 230 to 232 (TAE). 261-263 (RAE) contacts ATP. Glutamate 284 is an L-serine binding site. 348-351 (EISS) is a binding site for ATP. Serine 383 provides a ligand contact to L-serine.

This sequence belongs to the class-II aminoacyl-tRNA synthetase family. Type-1 seryl-tRNA synthetase subfamily. In terms of assembly, homodimer. The tRNA molecule binds across the dimer.

It is found in the cytoplasm. It catalyses the reaction tRNA(Ser) + L-serine + ATP = L-seryl-tRNA(Ser) + AMP + diphosphate + H(+). It carries out the reaction tRNA(Sec) + L-serine + ATP = L-seryl-tRNA(Sec) + AMP + diphosphate + H(+). The protein operates within aminoacyl-tRNA biosynthesis; selenocysteinyl-tRNA(Sec) biosynthesis; L-seryl-tRNA(Sec) from L-serine and tRNA(Sec): step 1/1. Its function is as follows. Catalyzes the attachment of serine to tRNA(Ser). Is also able to aminoacylate tRNA(Sec) with serine, to form the misacylated tRNA L-seryl-tRNA(Sec), which will be further converted into selenocysteinyl-tRNA(Sec). In Streptomyces avermitilis (strain ATCC 31267 / DSM 46492 / JCM 5070 / NBRC 14893 / NCIMB 12804 / NRRL 8165 / MA-4680), this protein is Serine--tRNA ligase 2.